The chain runs to 472 residues: Doublesex- and mab-3-related transcription factor 3 (472 aa).

The segment at residues 29–76 (CARCRNHGVLSWLKGHKRYCRFKDCTCEKCILIIERQRVMAAQVALRR) is a DNA-binding region (DM). Disordered stretches follow at residues 89 to 128 (DSLR…AELA) and 155 to 191 (EERL…GCFT). Residues 95 to 123 (PGPPPPGDAVAAPQPPPASQPSQPQPPRP) are compositionally biased toward pro residues. A compositionally biased stretch (basic and acidic residues) spans 155 to 179 (EERLGDGKSADNTEVFSDKDTDQRS). The DMA domain maps to 249–284 (RPPLEVLKKIFPNQKPTVLELILKGCGGDLVSAVEV). Positions 430–472 (TEDPRISIPDDGCPFVSKQSIYTEDDYDERSDSSDSRTLNTSS) are disordered.

The protein belongs to the DMRT family. As to quaternary structure, may homodimerize. In terms of tissue distribution, expressed in testis.

It is found in the nucleus. Its function is as follows. Probable transcription factor that plays a role in configuring the spinal circuits controlling stride in vertebrates. Involved in neuronal specification within specific subdivision of spinal cord neurons and in the development of a coordinated locomotor network controlling limb movements. May regulate transcription during sexual development. This chain is Doublesex- and mab-3-related transcription factor 3 (DMRT3), found in Homo sapiens (Human).